The primary structure comprises 943 residues: Isoleucine--tRNA ligase (943 aa).

The short motif at 58 to 68 is the 'HIGH' region element; sequence PYANGKIHIGH. Residue E567 participates in L-isoleucyl-5'-AMP binding. Residues 608–612 carry the 'KMSKS' region motif; it reads KMSKS. Residue K611 coordinates ATP. Residues C906, C909, C926, and C929 each coordinate Zn(2+).

Belongs to the class-I aminoacyl-tRNA synthetase family. IleS type 1 subfamily. As to quaternary structure, monomer. It depends on Zn(2+) as a cofactor.

It is found in the cytoplasm. The catalysed reaction is tRNA(Ile) + L-isoleucine + ATP = L-isoleucyl-tRNA(Ile) + AMP + diphosphate. Functionally, catalyzes the attachment of isoleucine to tRNA(Ile). As IleRS can inadvertently accommodate and process structurally similar amino acids such as valine, to avoid such errors it has two additional distinct tRNA(Ile)-dependent editing activities. One activity is designated as 'pretransfer' editing and involves the hydrolysis of activated Val-AMP. The other activity is designated 'posttransfer' editing and involves deacylation of mischarged Val-tRNA(Ile). The sequence is that of Isoleucine--tRNA ligase from Pseudomonas putida (strain ATCC 47054 / DSM 6125 / CFBP 8728 / NCIMB 11950 / KT2440).